A 931-amino-acid polypeptide reads, in one-letter code: Isoleucine--tRNA ligase (931 aa).

The 'HIGH' region motif lies at 58 to 68; that stretch reads PYANGHLHCGH. Position 559 (Glu-559) interacts with L-isoleucyl-5'-AMP. A 'KMSKS' region motif is present at residues 600-604; sequence KLSKS. Residue Lys-603 participates in ATP binding. Residues Cys-894, Cys-897, Cys-914, and Cys-917 each coordinate Zn(2+).

This sequence belongs to the class-I aminoacyl-tRNA synthetase family. IleS type 1 subfamily. Monomer. Requires Zn(2+) as cofactor.

It localises to the cytoplasm. It catalyses the reaction tRNA(Ile) + L-isoleucine + ATP = L-isoleucyl-tRNA(Ile) + AMP + diphosphate. Functionally, catalyzes the attachment of isoleucine to tRNA(Ile). As IleRS can inadvertently accommodate and process structurally similar amino acids such as valine, to avoid such errors it has two additional distinct tRNA(Ile)-dependent editing activities. One activity is designated as 'pretransfer' editing and involves the hydrolysis of activated Val-AMP. The other activity is designated 'posttransfer' editing and involves deacylation of mischarged Val-tRNA(Ile). The polypeptide is Isoleucine--tRNA ligase (Legionella pneumophila (strain Lens)).